The chain runs to 328 residues: Carbonic anhydrase-related protein 11 (328 aa).

Positions 1 to 23 (MGGAARLSAPQALVLWAALGAAA) are cleaved as a signal peptide. An Alpha-carbonic anhydrase domain is found at 33–303 (DWWSYKENLQ…LAHRALRGNR (271 aa)). Asparagine 118 carries an N-linked (GlcNAc...) asparagine glycan. Residues 300-328 (RGNRDPRHPERRCRGPNYRLHVDGGPHGR) are disordered. Basic and acidic residues predominate over residues 319-328 (LHVDGGPHGR).

It belongs to the alpha-carbonic anhydrase family.

Its subcellular location is the secreted. Functionally, does not have a catalytic activity. This is Carbonic anhydrase-related protein 11 (Ca11) from Mus musculus (Mouse).